A 207-amino-acid polypeptide reads, in one-letter code: Large ribosomal subunit protein uL4 (207 aa).

The tract at residues 53-76 (TVSEVSGTTKKPFKQKGTGNARQG) is disordered.

Belongs to the universal ribosomal protein uL4 family. As to quaternary structure, part of the 50S ribosomal subunit.

One of the primary rRNA binding proteins, this protein initially binds near the 5'-end of the 23S rRNA. It is important during the early stages of 50S assembly. It makes multiple contacts with different domains of the 23S rRNA in the assembled 50S subunit and ribosome. Its function is as follows. Forms part of the polypeptide exit tunnel. The sequence is that of Large ribosomal subunit protein uL4 from Rickettsia bellii (strain OSU 85-389).